The following is a 275-amino-acid chain: Formamidopyrimidine-DNA glycosylase (275 aa).

Proline 2 acts as the Schiff-base intermediate with DNA in catalysis. Glutamate 3 serves as the catalytic Proton donor. Lysine 58 (proton donor; for beta-elimination activity) is an active-site residue. Histidine 91 and arginine 110 together coordinate DNA. Residues 238-272 form an FPG-type zinc finger; the sequence is QVYGQTGKSCPRCGQAIVKLKVGGRGTHICPKCQK. Arginine 262 serves as the catalytic Proton donor; for delta-elimination activity.

Belongs to the FPG family. As to quaternary structure, monomer. It depends on Zn(2+) as a cofactor.

It catalyses the reaction Hydrolysis of DNA containing ring-opened 7-methylguanine residues, releasing 2,6-diamino-4-hydroxy-5-(N-methyl)formamidopyrimidine.. The enzyme catalyses 2'-deoxyribonucleotide-(2'-deoxyribose 5'-phosphate)-2'-deoxyribonucleotide-DNA = a 3'-end 2'-deoxyribonucleotide-(2,3-dehydro-2,3-deoxyribose 5'-phosphate)-DNA + a 5'-end 5'-phospho-2'-deoxyribonucleoside-DNA + H(+). In terms of biological role, involved in base excision repair of DNA damaged by oxidation or by mutagenic agents. Acts as a DNA glycosylase that recognizes and removes damaged bases. Has a preference for oxidized purines, such as 7,8-dihydro-8-oxoguanine (8-oxoG). Has AP (apurinic/apyrimidinic) lyase activity and introduces nicks in the DNA strand. Cleaves the DNA backbone by beta-delta elimination to generate a single-strand break at the site of the removed base with both 3'- and 5'-phosphates. This Streptococcus pyogenes serotype M3 (strain ATCC BAA-595 / MGAS315) protein is Formamidopyrimidine-DNA glycosylase.